Consider the following 705-residue polypeptide: Lethal(3)malignant brain tumor-like protein 2 (705 aa).

Residues 1–84 form a disordered region; it reads MEKPRSIEET…GTPRSLDGSG (84 aa). Phosphoserine is present on S13. Acidic residues predominate over residues 15–25; sequence PMEEEEDDDLE. Residues 38–49 show a composition bias toward low complexity; it reads SSVGSESSSYLE. Acidic residues predominate over residues 50-60; sequence ESSEAENEDRE. Residue S67 is modified to Phosphoserine. T76 is modified (phosphothreonine). The FCS-type zinc finger occupies 81–116; it reads DGSGSEPAVCEMCGIVGTREAFFSKTKRFCSVSCSR. Zn(2+) is bound by residues C90, C93, C110, and C114. 4 MBT repeats span residues 179-283, 291-391, 397-500, and 508-604; these read FDWG…LVPP, TDWK…IKMS, MAHH…LTPP, and FNWE…LQPP. S338 is subject to Phosphoserine. K405 is covalently cross-linked (Glycyl lysine isopeptide (Lys-Gly) (interchain with G-Cter in SUMO2)). Residues 608-665 are disordered; sequence EPATPLKAKEATKKKKKQFGKKRKRIPPTKTRPLRQGSKKPLLEDDPQGARKISSEPV. Positions 619–634 are enriched in basic residues; sequence TKKKKKQFGKKRKRIP. Residues K647, K659, and K675 each participate in a glycyl lysine isopeptide (Lys-Gly) (interchain with G-Cter in SUMO2) cross-link. A disordered region spans residues 680–705; it reads DVASPDKASSPELPVSVENIKQETDD. 3 positions are modified to phosphoserine: S683, S688, and S689. A Glycyl lysine isopeptide (Lys-Gly) (interchain with G-Cter in SUMO1); alternate cross-link involves residue K700. Residue K700 forms a Glycyl lysine isopeptide (Lys-Gly) (interchain with G-Cter in SUMO2); alternate linkage.

In terms of assembly, part of the E2F6.com-1 complex in G0 phase composed of E2F6, MGA, MAX, TFDP1, CBX3, BAT8, EUHMTASE1, RING1, RNF2, MBLR, BAT8 and YAF2.

The protein localises to the nucleus. In terms of biological role, putative Polycomb group (PcG) protein. PcG proteins maintain the transcriptionally repressive state of genes, probably via a modification of chromatin, rendering it heritably changed in its expressibility. Its association with a chromatin-remodeling complex suggests that it may contribute to prevent expression of genes that trigger the cell into mitosis. Binds to monomethylated and dimethylated 'Lys-20' on histone H4. Binds histone H3 peptides that are monomethylated or dimethylated on 'Lys-4', 'Lys-9' or 'Lys-27'. The sequence is that of Lethal(3)malignant brain tumor-like protein 2 (L3MBTL2) from Homo sapiens (Human).